The sequence spans 261 residues: Global transcriptional regulator CodY (261 aa).

Residues 1-159 (MPNLLEKTRK…ASTVVGIQLL (159 aa)) are GAF domain. The H-T-H motif DNA-binding region spans 207–226 (ASVIADRIGITRSVIVNALR).

The protein belongs to the CodY family.

The protein resides in the cytoplasm. DNA-binding global transcriptional regulator which is involved in the adaptive response to starvation and acts by directly or indirectly controlling the expression of numerous genes in response to nutrient availability. During rapid exponential growth, CodY is highly active and represses genes whose products allow adaptation to nutrient depletion. The sequence is that of Global transcriptional regulator CodY from Streptococcus agalactiae serotype III (strain NEM316).